Reading from the N-terminus, the 103-residue chain is MSGRGKGGKGLGKGGAKRHRKVLRDNIQGITKPAIRRLARRGGVKRISGLIYEETRTVLKTFLENVIRDSVTYTEHARRKTVTAMDVVYALKRQGRTLYGFGG.

A compositionally biased stretch (gly residues) spans 1 to 14 (MSGRGKGGKGLGKG). The interval 1–20 (MSGRGKGGKGLGKGGAKRHR) is disordered. Residues 17-21 (KRHRK) mediate DNA binding.

This sequence belongs to the histone H4 family. The nucleosome is a histone octamer containing two molecules each of H2A, H2B, H3 and H4 assembled in one H3-H4 heterotetramer and two H2A-H2B heterodimers. The octamer wraps approximately 147 bp of DNA.

The protein localises to the nucleus. It localises to the chromosome. Core component of nucleosome. Nucleosomes wrap and compact DNA into chromatin, limiting DNA accessibility to the cellular machineries which require DNA as a template. Histones thereby play a central role in transcription regulation, DNA repair, DNA replication and chromosomal stability. DNA accessibility is regulated via a complex set of post-translational modifications of histones, also called histone code, and nucleosome remodeling. This is Histone H4 (H4-I) from Chlamydomonas reinhardtii (Chlamydomonas smithii).